The chain runs to 96 residues: Myticin-B (96 aa).

The N-terminal stretch at 1–20 (MKATMLLAVVVAVFVAGTEA) is a signal peptide. Residues 61 to 96 (VKFPFGATQDAKSMNELEYTPIMKSMENLDNGMDML) constitute a propeptide, removed in mature form.

In terms of processing, contains four disulfide bonds. In terms of tissue distribution, hemocytes.

Its subcellular location is the secreted. Functionally, bacteriolytic activity against Gram-positive bacteria M.luteus, B.megaterium and A.viridans and Gram-negative bacteria E.coli D31. Possesses antifungal activity against F.oxysporum. The protein is Myticin-B of Mytilus galloprovincialis (Mediterranean mussel).